Consider the following 983-residue polypeptide: Receptor-like protein 19 (983 aa).

Positions 1–25 are cleaved as a signal peptide; it reads MMKGYITLSFLIILIFNFLDEFAAS. Topologically, residues 26 to 937 are extracellular; that stretch reads TRHLCDPDQS…EEDEEEVISW (912 aa). 2 N-linked (GlcNAc...) asparagine glycosylation sites follow: Asn-66 and Asn-102. 31 LRR repeats span residues 82 to 108, 111 to 135, 136 to 159, 161 to 183, 184 to 207, 209 to 231, 232 to 255, 256 to 281, 283 to 302, 303 to 327, 328 to 351, 353 to 375, 376 to 399, 401 to 424, 425 to 448, 450 to 474, 475 to 498, 501 to 524, 525 to 548, 550 to 571, 578 to 602, 603 to 628, 629 to 652, 654 to 674, 675 to 700, 702 to 720, 721 to 744, 793 to 817, 818 to 840, 841 to 865, and 867 to 890; these read FGDVIELDLSFSCLRGQLNSNSSLFRL, LRFLTTLDLSNNDFIGQIPSSLETL, SNLTTLDLSRNHFSGRIPSSIGNL, HLIFVDFSHNNFSGQIPSSLGYL, SHLTSFNLSYNNFSGRVPSSIGNL, YLTTLRLSRNSFFGELPSSLGSL, FHLTDLILDTNHFVGKIPSSLGNL, SHLTSIDLHKNNFVGEIPFSLGNLSC, TSFILSDNNIVGEIPSSFGN, LNQLDILNVKSNKLSGSFPIALLNL, RKLSTLSLFNNRLTGTLPSNMSSL, NLKLFDATENHFTGPLPSSLFNI, PSLKTITLENNQLNGSLGFGNISS, SNLTVLRLGNNNFRGPIHRSISKL, VNLKELDLSNYNTQGLVDFTIFSH, KSIEYLNLSHLNTTTTIDMYEILSS, FKLLDTLDLSGSHVSTTNKSSLSN, LVLISQLYLSGCGITEFPKFLRSQ, ELMLTLDISNNKIKGQVPGWLWML, VLNYVNLSNNTFIGFERSTKLG, PPAMRQLFCSNNNFTGNIPSFICEL, PYLSTLDFSNNKFNGSIPTCMGNIQS, PYLQALNLRHNRLSGLLPENIFES, ISLDVGHNQLVGKLPRSLSHI, SSLGLLNVESNKISDTFPLWLSSLQE, QVLVLRSNAFYGPIEKTQF, SKLRIIDISGNQFNGTLPANFFVN, LKVFTVIDFSGNKFEGEIPKSIGLL, KELHVLNLSNNALSGHIASSMGN, LMALESLDVSQNKLSGEIPQELGKL, and YLAYMNFSHNQLVGLLPGGTQFQT. N-linked (GlcNAc...) asparagine glycosylation is found at Asn-137, Asn-158, Asn-171, Asn-190, Asn-195, and Asn-206. N-linked (GlcNAc...) asparagine glycosylation is found at Asn-254 and Asn-278. N-linked (GlcNAc...) asparagine glycosylation is present at Asn-347. N-linked (GlcNAc...) asparagine glycans are attached at residues Asn-389, Asn-396, and Asn-402. N-linked (GlcNAc...) asparagine glycosylation is found at Asn-456, Asn-461, Asn-492, and Asn-498. Residues Asn-555, Asn-558, Asn-590, and Asn-616 are each glycosylated (N-linked (GlcNAc...) asparagine). N-linked (GlcNAc...) asparagine glycosylation is found at Asn-734 and Asn-744. The N-linked (GlcNAc...) asparagine glycan is linked to Asn-824. Asn-872 carries an N-linked (GlcNAc...) asparagine glycan. The helical transmembrane segment at 938–958 threads the bilayer; the sequence is IAAVIGFILGTALGLTFGCIL. The Cytoplasmic portion of the chain corresponds to 959 to 983; it reads FSYKPDWFKNPFVRDKRRNIGTITH.

Belongs to the RLP family.

Its subcellular location is the cell membrane. The sequence is that of Receptor-like protein 19 from Arabidopsis thaliana (Mouse-ear cress).